We begin with the raw amino-acid sequence, 525 residues long: MSNIHEHKILILDFGSQYTQLIARRIREIGVYCELWAWDVSEEQIRGFAPNGIILAGGPESVTADNSPRAPEYVFNAGVPVLGICYGMQTMSEQLGGKVIQGVGEGEFGYAQVEVQTESALFKAIEDAVSETGKPLLDVWMSHGDKVSEIPDGFVTVANTETCPFAAMANEDKKFYGVQFHPEVTHTRQGKRMLEHFALDICGCDANWKPSSIIEDAVERLKKQIGDDEVILGLSGGVDSSVVAMLLHRAIGDKLTCVFVDNGLLRLNEAQQVMDMFGDHFGLNIIHVDAENRFLDAMAGEADPESKRKIIGHVFVEIFDEESKKCANAKWLAQGTIYPDVIESAGSATGKAHVIKSHHNVGGLPDDMELGLVEPLRELFKDEVRKIGLELGLPYDMLYRHPFPGPGLGVRVLGEVKKEYCDLLRLADAIFIEELHKADLYNKVSQAFTVFLPVRSVGVMGDGRKYDWVVSLRAVETIDFMTAHWAHLPYDFLGRVSNRIINEIDGISRVVYDISGKPPATIEWE.

One can recognise a Glutamine amidotransferase type-1 domain in the interval 8–207 (KILILDFGSQ…ALDICGCDAN (200 aa)). Cysteine 85 acts as the Nucleophile in catalysis. Residues histidine 181 and glutamate 183 contribute to the active site. The GMPS ATP-PPase domain occupies 208-400 (WKPSSIIEDA…LGLPYDMLYR (193 aa)). 235 to 241 (SGGVDSS) serves as a coordination point for ATP.

In terms of assembly, homodimer.

The enzyme catalyses XMP + L-glutamine + ATP + H2O = GMP + L-glutamate + AMP + diphosphate + 2 H(+). It functions in the pathway purine metabolism; GMP biosynthesis; GMP from XMP (L-Gln route): step 1/1. In terms of biological role, catalyzes the synthesis of GMP from XMP. This Shewanella piezotolerans (strain WP3 / JCM 13877) protein is GMP synthase [glutamine-hydrolyzing].